Here is a 221-residue protein sequence, read N- to C-terminus: Tumor protein p53-inducible nuclear protein 2 (221 aa).

Residues 26–41 (VSEEDEVDGWLIIDLQ) carry the LIR motif. The disordered stretch occupies residues 41 to 68 (QDSYTAPPDPGASPAPAGRPPPAPSLMD). The segment covering 47-64 (PPDPGASPAPAGRPPPAP) has biased composition (pro residues). S136 is subject to Phosphoserine. The tract at residues 177–210 (RQRAERHTLSAKVLQRQNRARESRSRRPKHQGSF) is disordered.

As to quaternary structure, interacts with VMP1, GABARAP, GABARAPL1, GABARAPL2, MAP1LC3A, MAP1LC3B, MAP1LC3C and THRA.

The protein resides in the cytoplasm. Its subcellular location is the cytosol. The protein localises to the nucleus. It localises to the PML body. It is found in the cytoplasmic vesicle. The protein resides in the autophagosome. In terms of biological role, dual regulator of transcription and autophagy. Positively regulates autophagy and is required for autophagosome formation and processing. May act as a scaffold protein that recruits MAP1LC3A, GABARAP and GABARAPL2 and brings them to the autophagosome membrane by interacting with VMP1 where, in cooperation with the BECN1-PI3-kinase class III complex, they trigger autophagosome development. Acts as a transcriptional activator of THRA. This chain is Tumor protein p53-inducible nuclear protein 2 (Tp53inp2), found in Mus musculus (Mouse).